The chain runs to 326 residues: tRNA uridine(34) hydroxylase (326 aa).

Residues 123–217 enclose the Rhodanese domain; sequence SDPDVLLVDT…YLEEVPEENS (95 aa). Cys-177 acts as the Cysteine persulfide intermediate in catalysis. Residues 276–320 are compositionally biased toward basic and acidic residues; that stretch reads EEQKSRFREREKQVQLANERGETHVGGDAAKLIEQRKQEKKEKKQ. The disordered stretch occupies residues 276–326; it reads EEQKSRFREREKQVQLANERGETHVGGDAAKLIEQRKQEKKEKKQQQRSSK.

This sequence belongs to the TrhO family.

The catalysed reaction is uridine(34) in tRNA + AH2 + O2 = 5-hydroxyuridine(34) in tRNA + A + H2O. Its function is as follows. Catalyzes oxygen-dependent 5-hydroxyuridine (ho5U) modification at position 34 in tRNAs. This Aliivibrio salmonicida (strain LFI1238) (Vibrio salmonicida (strain LFI1238)) protein is tRNA uridine(34) hydroxylase.